Reading from the N-terminus, the 225-residue chain is Uracil phosphoribosyltransferase (225 aa).

Residue Lys-36–Arg-40 coordinates GTP. 5-phospho-alpha-D-ribose 1-diphosphate contacts are provided by residues Arg-86, Arg-111, and Asp-145–Thr-153. Uracil-binding positions include Ile-210 and Gly-215 to Ala-217. Asp-216 contributes to the 5-phospho-alpha-D-ribose 1-diphosphate binding site.

The protein belongs to the UPRTase family. The cofactor is Mg(2+).

The catalysed reaction is UMP + diphosphate = 5-phospho-alpha-D-ribose 1-diphosphate + uracil. Its pathway is pyrimidine metabolism; UMP biosynthesis via salvage pathway; UMP from uracil: step 1/1. With respect to regulation, allosterically activated by GTP. In terms of biological role, catalyzes the conversion of uracil and 5-phospho-alpha-D-ribose 1-diphosphate (PRPP) to UMP and diphosphate. The polypeptide is Uracil phosphoribosyltransferase (Haloarcula marismortui (strain ATCC 43049 / DSM 3752 / JCM 8966 / VKM B-1809) (Halobacterium marismortui)).